A 168-amino-acid polypeptide reads, in one-letter code: uncharacterized protein (168 aa).

Residues 1 to 21 constitute a signal peptide (or 19); it reads MKLLKALAVLSLATISSHSFA.

This is an uncharacterized protein from Haemophilus influenzae (strain ATCC 51907 / DSM 11121 / KW20 / Rd).